The primary structure comprises 378 residues: UPF0754 membrane protein BCAH187_A1042 (378 aa).

Helical transmembrane passes span 1-21 (MNIWLSMLTTTGLGAIIGGFT) and 357-377 (YLGALLGGMIGIVQGLLLLFL).

Belongs to the UPF0754 family.

Its subcellular location is the cell membrane. This is UPF0754 membrane protein BCAH187_A1042 from Bacillus cereus (strain AH187).